The following is a 563-amino-acid chain: Arginine--tRNA ligase (563 aa).

The short motif at 122-132 (PNIAKPISMGH) is the 'HIGH' region element.

It belongs to the class-I aminoacyl-tRNA synthetase family. Monomer.

It is found in the cytoplasm. The enzyme catalyses tRNA(Arg) + L-arginine + ATP = L-arginyl-tRNA(Arg) + AMP + diphosphate. The chain is Arginine--tRNA ligase from Enterococcus faecalis (strain ATCC 700802 / V583).